An 803-amino-acid chain; its full sequence is Phenylalanine--tRNA ligase beta subunit (803 aa).

The tRNA-binding domain maps to 39–150; that stretch reads AKVLAPFTIA…ADAPVGAAYA (112 aa). In terms of domain architecture, B5 spans 400–475; that stretch reads ADDKIIDFPL…RIVGVDKVPL (76 aa). Mg(2+)-binding residues include aspartate 453, aspartate 459, glutamate 462, and glutamate 463. Positions 709 to 802 constitute an FDX-ACB domain; that stretch reads SAFHPVSRDF…VTKKTGGSLR (94 aa).

Belongs to the phenylalanyl-tRNA synthetase beta subunit family. Type 1 subfamily. As to quaternary structure, tetramer of two alpha and two beta subunits. It depends on Mg(2+) as a cofactor.

The protein localises to the cytoplasm. It carries out the reaction tRNA(Phe) + L-phenylalanine + ATP = L-phenylalanyl-tRNA(Phe) + AMP + diphosphate + H(+). This chain is Phenylalanine--tRNA ligase beta subunit, found in Rhodopseudomonas palustris (strain ATCC BAA-98 / CGA009).